The sequence spans 179 residues: Bifunctional protein PyrR (179 aa).

Positions 100-112 (VILVDDVLFTGRT) match the PRPP-binding motif.

Belongs to the purine/pyrimidine phosphoribosyltransferase family. PyrR subfamily.

It carries out the reaction UMP + diphosphate = 5-phospho-alpha-D-ribose 1-diphosphate + uracil. Functionally, regulates the transcription of the pyrimidine nucleotide (pyr) operon in response to exogenous pyrimidines. Also displays a weak uracil phosphoribosyltransferase activity which is not physiologically significant. The protein is Bifunctional protein PyrR of Actinobacillus succinogenes (strain ATCC 55618 / DSM 22257 / CCUG 43843 / 130Z).